The primary structure comprises 354 residues: DNA integrity scanning protein DisA (354 aa).

In terms of domain architecture, DAC spans E6–S144. Residues G73, L91, and T104–T108 each bind ATP.

It belongs to the DisA family. As to quaternary structure, homooctamer. Requires Mg(2+) as cofactor.

The enzyme catalyses 2 ATP = 3',3'-c-di-AMP + 2 diphosphate. In terms of biological role, participates in a DNA-damage check-point that is active prior to asymmetric division when DNA is damaged. DisA forms globular foci that rapidly scan along the chromosomes during sporulation, searching for lesions. When a lesion is present, DisA pauses at the lesion site. This triggers a cellular response that culminates in a temporary block in sporulation initiation. Functionally, also has diadenylate cyclase activity, catalyzing the condensation of 2 ATP molecules into cyclic di-AMP (c-di-AMP). c-di-AMP acts as a signaling molecule that couples DNA integrity with progression of sporulation. The rise in c-di-AMP level generated by DisA while scanning the chromosome, operates as a positive signal that advances sporulation; upon encountering a lesion, the DisA focus arrests at the damaged site and halts c-di-AMP synthesis. The polypeptide is DNA integrity scanning protein DisA (Clostridium kluyveri (strain ATCC 8527 / DSM 555 / NBRC 12016 / NCIMB 10680 / K1)).